The sequence spans 199 residues: NAD(P)H dehydrogenase (quinone) (199 aa).

The 187-residue stretch at 4 to 190 folds into the Flavodoxin-like domain; sequence VLVLYYSAYG…DGARFQGKRV (187 aa). FMN-binding positions include 10 to 15 and 78 to 80; these read SAYGHM and TRY. Tyrosine 12 contributes to the NAD(+) binding site. Tryptophan 98 contacts substrate. Residues 113 to 119 and histidine 134 contribute to the FMN site; that span reads STATQHG. Residues 157-185 form a disordered region; that stretch reads GGAPYGMTTTADGDGSRQPSEQELDGARF. A compositionally biased stretch (polar residues) spans 163–177; it reads MTTTADGDGSRQPSE.

This sequence belongs to the WrbA family. It depends on FMN as a cofactor.

It catalyses the reaction a quinone + NADH + H(+) = a quinol + NAD(+). The enzyme catalyses a quinone + NADPH + H(+) = a quinol + NADP(+). This is NAD(P)H dehydrogenase (quinone) from Brucella anthropi (strain ATCC 49188 / DSM 6882 / CCUG 24695 / JCM 21032 / LMG 3331 / NBRC 15819 / NCTC 12168 / Alc 37) (Ochrobactrum anthropi).